The sequence spans 183 residues: uncharacterized protein (183 aa).

The interval 1–23 (MGSSFVIDRSSSSPAPPRGPAPK) is disordered.

This is an uncharacterized protein from Saccharomyces cerevisiae (strain ATCC 204508 / S288c) (Baker's yeast).